The sequence spans 158 residues: 2-C-methyl-D-erythritol 2,4-cyclodiphosphate synthase (158 aa).

A divalent metal cation contacts are provided by aspartate 9 and histidine 11. Residues 9-11 and 35-36 contribute to the 4-CDP-2-C-methyl-D-erythritol 2-phosphate site; these read DVH and HS. Histidine 43 contributes to the a divalent metal cation binding site. 4-CDP-2-C-methyl-D-erythritol 2-phosphate is bound by residues 57–59, 62–66, 133–136, phenylalanine 140, and arginine 143; these read DLG, FPDTD, and TTTE.

It belongs to the IspF family. In terms of assembly, homotrimer. A divalent metal cation is required as a cofactor.

It carries out the reaction 4-CDP-2-C-methyl-D-erythritol 2-phosphate = 2-C-methyl-D-erythritol 2,4-cyclic diphosphate + CMP. It functions in the pathway isoprenoid biosynthesis; isopentenyl diphosphate biosynthesis via DXP pathway; isopentenyl diphosphate from 1-deoxy-D-xylulose 5-phosphate: step 4/6. Its function is as follows. Involved in the biosynthesis of isopentenyl diphosphate (IPP) and dimethylallyl diphosphate (DMAPP), two major building blocks of isoprenoid compounds. Catalyzes the conversion of 4-diphosphocytidyl-2-C-methyl-D-erythritol 2-phosphate (CDP-ME2P) to 2-C-methyl-D-erythritol 2,4-cyclodiphosphate (ME-CPP) with a corresponding release of cytidine 5-monophosphate (CMP). This chain is 2-C-methyl-D-erythritol 2,4-cyclodiphosphate synthase, found in Desulfitobacterium hafniense (strain DSM 10664 / DCB-2).